Consider the following 48-residue polypeptide: uncharacterized protein (48 aa).

This is an uncharacterized protein from Dictyostelium discoideum (Social amoeba).